The chain runs to 670 residues: Probable metal-nicotianamine transporter YSL4 (670 aa).

Transmembrane regions (helical) follow at residues 35 to 55, 59 to 79, 107 to 127, 151 to 171, 273 to 293, 318 to 338, 389 to 409, 416 to 436, 450 to 470, 507 to 527, 559 to 579, 601 to 621, and 636 to 656; these read ITIR…IITH, LTIG…FFFI, CVVS…LIAM, GLWW…FCLV, LVNC…WPFI, VFIA…KIIV, FAVS…PLIF, FVLC…YGAG, GLFI…GLAA, LGTA…WTAF, PKHC…VNLI, FYIG…MLVW, and VASG…ILSI.

It belongs to the YSL (TC 2.A.67.2) family.

It localises to the membrane. May be involved in the transport of nicotianamine-chelated metals. This Arabidopsis thaliana (Mouse-ear cress) protein is Probable metal-nicotianamine transporter YSL4 (YSL4).